The primary structure comprises 1156 residues: MNQNKHGIIGASNCGCASDDVAKYPLANNPYSSALNLNSCQNSSILNWINIIGDAAKEAVSIGTTIVSLITAPSLTGLISIVYDLIGKVLGGSSGQSISDLSICDLLSIIDLRVSQSVLNDGIADFNGSVLLYRNYLEALDSWNKNPNSASAEELRTRFRIADSEFDRILTRGSLTNGGSLARQNAQILLLPSFASAAFFHLLLLRDATRYGTNWGLYNATPFINYQSKLVELIELYTDYCVHWYNRGFNELRQRGTSATAWLEFHRYRREMTLMVLDIVASFSSLDITNYPIETDFQLSRVIYTDPIGFVHRSSLRGESWFSFVNRANFSDLENAIPNPRPSWFLNNMIISTGSLTLPVSPSTDRARVWYGSRDRISPANSQFITELISGQHTTATQTILGRNIFRVDSQACNLNDTTYGVNRAVFYHDASEGSQRSVYEGYIRTTGIDNPRVQNINTYLPGENSDIPTPEDYTHILSTTINLTGGLRQVASNRRSSLVMYGWTHKSLARNNTINPDRITQIPLTKVDTRGTGVSYVNDPGFIGGALLQRTDHGSLGVLRVQFPLHLRQQYRIRVRYASTTNIRLSVNGSFGTISQNLPSTMRLGEDLRYGSFAIREFNTSIRPTASPDQIRLTIEPSFIRQEVYVDRIEFIPVNPTREAKEDLEAAKKAVASLFTRTRDGLQVNVKDYQVDQAANLVSCLSDEQYGYDKKMLLEAVRAAKRLSRERNLLQDPDFNTINSTEENGWKASNGVTISEGGPFYKGRAIQLASARENYPTYIYQKVDASELKPYTRYRLDGFVKSSQDLEIDLIHHHKVHLVKNVPDNLVSDTYPDDSCSGINRCQEQQMVNAQLETEHHHPMDCCEAAQTHEFSSYIDTGDLNSSVDQGIWAIFKVRTTDGYATLGNLELVEVGPLSGESLEREQRDNTKWSAELGRKRAETDRVYQDAKQSINHLFVDYQDQQLNPEIGMADIMDAQNLVASISDVYSDAVLQIPGINYEIYTELSNRLQQASYLYTSRNAVQNGDFNNGLDSWNATAGASVQQDGNTHFLVLSHWDAQVSQQFRVQPNCKYVLRVTAEKVGGGDGYVTIRDDAHHTETLTFNACDYDINGTYVTDNTYLTKEVVFHPETQHMWVEVNETEGAFHIDSIEFVETEK.

The propeptide at 1 to 23 (MNQNKHGIIGASNCGCASDDVAK) is removed in mature form.

Belongs to the delta endotoxin family.

Its function is as follows. Promotes colloidosmotic lysis by binding to the midgut epithelial cells of insects. This protein is toxic to Galleria mellonella. The chain is Pesticidal crystal protein Cry9Aa (cry9Aa) from Bacillus thuringiensis subsp. galleriae.